The primary structure comprises 604 residues: Protein CBFA2T2 (604 aa).

Residues 25-105 form a disordered region; the sequence is KRVPAMPGSP…SSTSSALTNQ (81 aa). Position 33 is a phosphoserine (serine 33). A Glycyl lysine isopeptide (Lys-Gly) (interchain with G-Cter in SUMO2) cross-link involves residue lysine 38. Over residues 46–59 the composition is skewed to pro residues; that stretch reads PTMPPLPPINPGGP. Polar residues-rich tracts occupy residues 64–79 and 88–105; these read FTPT…SPPT and QRFS…LTNQ. The interaction with PRDM14 stretch occupies residues 107–215; it reads LPATCGARQL…QHEHLLLNTS (109 aa). Positions 113-208 constitute a TAFH domain; it reads ARQLSKLKRF…TPSQYLAQHE (96 aa). A disordered region spans residues 229 to 265; sequence VHGNGKRPSPERREENSFDRDTIAPEPPAKRVCTISP. The segment covering 236–251 has biased composition (basic and acidic residues); it reads PSPERREENSFDRDTI. Residue serine 264 is modified to Phosphoserine. The tract at residues 331 to 377 is nervy homology region 2 (NHR2); the sequence is QDELVDHRLTEREWADEWKHLDHALNCIMEMVEKTRRSMAVLRRCQE. Positions 397–427 are disordered; sequence RKTGTELVSRQHSPGSADSLSNDSQREFNSR. The span at 402-419 shows a compositional bias: polar residues; the sequence is ELVSRQHSPGSADSLSND. Position 409 is a phosphoserine (serine 409). Residues 435–484 are nervy homology region 3 (NHR3); the sequence is VEFWKKTEEAVNKVKIQAMSEVQKAVAEAEQKAFEVIATERARMEQTIAD. Lysine 449 participates in a covalent cross-link: Glycyl lysine isopeptide (Lys-Gly) (interchain with G-Cter in SUMO2). Residues 451–491 are a coiled coil; that stretch reads QAMSEVQKAVAEAEQKAFEVIATERARMEQTIADVKRQAAE. Positions 507, 510, 518, 521, 527, 531, 539, and 543 each coordinate Zn(2+). Residues 507-543 form an MYND-type zinc finger; the sequence is CWNCGRKASETCSGCNIARYCGSFCQHKDWERHHRLC. The tract at residues 547-604 is disordered; that stretch reads LHGQSPHGQGRPLLPVGRGSSARSADCSVPSPALDKTSATTSRSSTPASVTAIDTNGL. Serine 577 is modified (phosphoserine). The segment covering 583–598 has biased composition (low complexity); it reads TSATTSRSSTPASVTA.

Belongs to the CBFA2T family. Homooligomer. Homotetramerization is mediated by nervy homology region 2. Can interact with RUNX1T1/CBFA2T1 and CBFA2T3/MTG16; heterotetramerization between members of the CBFA2T family is proposed. Forms a heterooligomer with the AML1-MTG8/ETO fusion protein. Interacts with PRDM14. Interacts with RBPJ, GFI1, TCF4. Interacts with TAL1 and CBFA2T3/MTG16; the heteromer with CBFA2T3/MTG16 may function in repression of TAL1. Ubiquitously expressed in fetal and adult tissues. Highly expressed in adult brain, heart, lung, kidney, lymph node, appendix, thymus, testis, uterus, small intestine, prostate and thymus.

It localises to the nucleus. Transcriptional corepressor which facilitates transcriptional repression via its association with DNA-binding transcription factors and recruitment of other corepressors and histone-modifying enzymes. Via association with PRDM14 is involved in regulation of embryonic stem cell (ESC) pluripotency. Involved in primordial germ cell (PCG) formation. Stabilizes PRDM14 and OCT4 on chromatin in a homooligomerization-dependent manner. Can repress the expression of MMP7 in a ZBTB33-dependent manner. May function as a complex with the chimeric protein RUNX1/AML1-CBFA2T1/MTG8 (AML1-MTG8/ETO fusion protein) which is produced in acute myeloid leukemia with the chromosomal translocation t(8;21). May thus be involved in the repression of AML1-dependent transcription and the induction of G-CSF/CSF3-dependent cell growth. May be a tumor suppressor gene candidate involved in myeloid tumors with the deletion of the 20q11 region. Through heteromerization with CBFA2T3/MTG16 may be involved in regulation of the proliferation and the differentiation of erythroid progenitors by repressing the expression of TAL1 target genes. Required for the maintenance of the secretory cell lineage in the small intestine. Can inhibit Notch signaling probably by association with RBPJ and may be involved in GFI1-mediated Paneth cell differentiation. This chain is Protein CBFA2T2 (CBFA2T2), found in Homo sapiens (Human).